The sequence spans 278 residues: Troponin T, slow skeletal muscle (278 aa).

Over residues 1 to 37 (MSDTEEQEYEEEQPEEEAAEEEEEAPEEPEPVAEPEE) the composition is skewed to acidic residues. 2 disordered regions span residues 1–63 (MSDT…RVDF) and 105–153 (RRRS…KKKV). S2 carries the post-translational modification Phosphoserine; by CK2. Residues 43 to 55 (SRPVVPPLIPPKI) show a composition bias toward pro residues. The segment covering 105 to 149 (RRRSERAEQQRFRTEKERERQAKLAEEKMRKEEEEAKKRAEDDAK) has biased composition (basic and acidic residues).

This sequence belongs to the troponin T family. In terms of assembly, interacts with TPM3.

Troponin T is the tropomyosin-binding subunit of troponin, the thin filament regulatory complex which confers calcium-sensitivity to striated muscle actomyosin ATPase activity. This is Troponin T, slow skeletal muscle (TNNT1) from Homo sapiens (Human).